A 392-amino-acid polypeptide reads, in one-letter code: INCREASED PETAL GROWTH ANISOTROPY 1-like protein 1 (392 aa).

Positions 11–52 form a coiled coil; sequence LLRLVKELQAYLVRNDKLEKENHELRQEVARLRAQVSNLKSH. Polar residues-rich tracts occupy residues 65–76 and 100–109; these read QSSYDGSNTDGS and PTIQGQSTAT. A disordered region spans residues 65–128; the sequence is QSSYDGSNTD…SKRTLGKRSV (64 aa). A coiled-coil region spans residues 269–299; it reads KDSLTQALQRIQSLQDRLEESVNNTEKMRDS.

Belongs to the IPGA1 family.

Its subcellular location is the cytoplasm. It is found in the cytoskeleton. Its function is as follows. Microtubule-associated protein probably involved in the regulation of microtubule organization. The polypeptide is INCREASED PETAL GROWTH ANISOTROPY 1-like protein 1 (Arabidopsis thaliana (Mouse-ear cress)).